A 235-amino-acid polypeptide reads, in one-letter code: Superoxide dismutase [Mn] 3.1, mitochondrial (235 aa).

Residues 1-31 (MALRTLASKKVLSFPFGGAGRPLAAAASARG) constitute a mitochondrion transit peptide. Mn(2+) contacts are provided by H59, H107, D196, and H200.

The protein belongs to the iron/manganese superoxide dismutase family. In terms of assembly, homotetramer. Requires Mn(2+) as cofactor.

Its subcellular location is the mitochondrion matrix. It catalyses the reaction 2 superoxide + 2 H(+) = H2O2 + O2. In terms of biological role, destroys superoxide anion radicals which are normally produced within the cells and which are toxic to biological systems. In Zea mays (Maize), this protein is Superoxide dismutase [Mn] 3.1, mitochondrial (SODA.4).